Here is an 83-residue protein sequence, read N- to C-terminus: Mu-theraphotoxin-Hhn2i (83 aa).

The signal sequence occupies residues 1–21; the sequence is MKASMFLALAGLVLLFVVGYA. A propeptide spanning residues 22 to 48 is cleaved from the precursor; the sequence is SESEEKEFPRELLSKIFAVDDFKGEER. 3 cysteine pairs are disulfide-bonded: cysteine 50–cysteine 65, cysteine 57–cysteine 70, and cysteine 64–cysteine 77. Position 81 is a leucine amide (leucine 81).

It belongs to the neurotoxin 10 (Hwtx-1) family. 15 (Hntx-3) subfamily. As to quaternary structure, monomer. In terms of tissue distribution, expressed by the venom gland.

It localises to the secreted. Its function is as follows. Lethal neurotoxin. Selectively blocks tetrodotoxin-sensitive voltage-gated sodium channels (Nav). Does not affect tetrodotoxin-resistant voltage-gated sodium channels or calcium channels. This Cyriopagopus hainanus (Chinese bird spider) protein is Mu-theraphotoxin-Hhn2i.